The primary structure comprises 119 residues: NADH-quinone oxidoreductase subunit A (119 aa).

A run of 3 helical transmembrane segments spans residues 7-27 (FPVL…MFLG), 63-83 (LIAI…PWGV), and 88-108 (IGWF…VGFV).

The protein belongs to the complex I subunit 3 family. As to quaternary structure, NDH-1 is composed of 14 different subunits. Subunits NuoA, H, J, K, L, M, N constitute the membrane sector of the complex.

The protein localises to the cell membrane. It carries out the reaction a quinone + NADH + 5 H(+)(in) = a quinol + NAD(+) + 4 H(+)(out). Its function is as follows. NDH-1 shuttles electrons from NADH, via FMN and iron-sulfur (Fe-S) centers, to quinones in the respiratory chain. The immediate electron acceptor for the enzyme in this species is believed to be ubiquinone. Couples the redox reaction to proton translocation (for every two electrons transferred, four hydrogen ions are translocated across the cytoplasmic membrane), and thus conserves the redox energy in a proton gradient. The polypeptide is NADH-quinone oxidoreductase subunit A (Polynucleobacter asymbioticus (strain DSM 18221 / CIP 109841 / QLW-P1DMWA-1) (Polynucleobacter necessarius subsp. asymbioticus)).